We begin with the raw amino-acid sequence, 632 residues long: Topoisomerase I damage affected protein 7 (632 aa).

Residues 1 to 18 show a composition bias toward polar residues; it reads MNSNSTIGRTTLGESDTI. Disordered stretches follow at residues 1–33, 87–109, 236–267, 295–322, and 335–359; these read MNSNSTIGRTTLGESDTISLSFSEPSSSLNSRS, TLVSSTDSSSSSEQDTYSSQYDP, SPSTTSNKDTTFPSSSRNTSTSFYSSSLSSTN, PTSSSVSSSSSKVPSNRPSSSSSSDDTT, and QSTTSSSIPPTTQTPSTSTISTSPI. A glycan (N-linked (GlcNAc...) asparagine) is linked at asparagine 4. Low complexity-rich tracts occupy residues 19–33 and 87–108; these read SLSFSEPSSSLNSRS and TLVSSTDSSSSSEQDTYSSQYD. N-linked (GlcNAc...) asparagine glycosylation occurs at asparagine 253. A helical membrane pass occupies residues 453–473; it reads IVGSVVGSVGGILICVLVVWF. A glycan (N-linked (GlcNAc...) asparagine) is linked at asparagine 488. The span at 506–537 shows a compositional bias: polar residues; the sequence is QAKEASLQAQDSGSQQRNTETASANNPFSNEF. The segment at 506–551 is disordered; that stretch reads QAKEASLQAQDSGSQQRNTETASANNPFSNEFNFKARGNPPPVPPP. Residue lysine 508 forms a Glycyl lysine isopeptide (Lys-Gly) (interchain with G-Cter in ubiquitin) linkage. N-linked (GlcNAc...) asparagine glycosylation is found at asparagine 553, asparagine 558, and asparagine 622. Serine 624 bears the Phosphoserine mark.

The protein belongs to the TDA7 family.

The protein resides in the vacuole membrane. This is Topoisomerase I damage affected protein 7 (TDA7) from Saccharomyces cerevisiae (strain Lalvin EC1118 / Prise de mousse) (Baker's yeast).